Here is a 274-residue protein sequence, read N- to C-terminus: MQKVVKLHNIKIGNDLPFILIAGPCQIEGQDHALFMAEKLVKLTSKLDIPFIYKSSFDKANRTSINGVRGLGIEKGLEVLSKVKAEFDCPIVTDVHSESQCTETARVVDILQIPAFLCRQTDLLQAAAKTGKIVKVKKGQFLAPWDMKNVQTKLKAFGAENILFTERGTCFGYNNLVSDMRSLAIMAKLNVPVIFDATHSVQQPGGLGDSTGGERKYVELLAKAATTVGIAGMYMEVHQDPDNAPSDGPCMIKLDNLESILIKLKKYDKITKEK.

The protein belongs to the KdsA family.

It is found in the cytoplasm. It carries out the reaction D-arabinose 5-phosphate + phosphoenolpyruvate + H2O = 3-deoxy-alpha-D-manno-2-octulosonate-8-phosphate + phosphate. It functions in the pathway carbohydrate biosynthesis; 3-deoxy-D-manno-octulosonate biosynthesis; 3-deoxy-D-manno-octulosonate from D-ribulose 5-phosphate: step 2/3. The protein operates within bacterial outer membrane biogenesis; lipopolysaccharide biosynthesis. In Rickettsia canadensis (strain McKiel), this protein is 2-dehydro-3-deoxyphosphooctonate aldolase.